A 440-amino-acid chain; its full sequence is Doublesex- and mab-3-related transcription factor A2 (440 aa).

Positions 59–106 (CARCRNHGVVSALKGHKRYCRWKDCMCAKCTLIAERQRVMAAQVALRR) form a DNA-binding region, DM. The interval 167–261 (PKTPLPGTVT…SPSSAASRQM (95 aa)) is disordered. The span at 199 to 213 (DMRHGSGSENGDRES) shows a compositional bias: basic and acidic residues. Residues 229-241 (TPGSISPIGSDSG) are compositionally biased toward low complexity. Positions 251–261 (PSPSSAASRQM) are enriched in polar residues. The DMA domain maps to 261–296 (MNAIDILTRVFPNHKRSVLELVLQGCGKNVVQAIEQ).

This sequence belongs to the DMRT family. In terms of tissue distribution, restrictively expressed in brain and developing germ cells, especially in spermatogonia, spermatocytes, spermatids, and sperm cells, and in developing oocytes, including early perinucleolus stage oocyte, late yolk vesicle stage oocyte, and oil drop stage oocyte.

The protein resides in the nucleus. In terms of biological role, may be involved in sexual development. This chain is Doublesex- and mab-3-related transcription factor A2 (dmrta2), found in Danio rerio (Zebrafish).